The chain runs to 465 residues: Ribosomal oxygenase 2 (465 aa).

The JmjC domain maps to 139–271; that stretch reads QPQRFKDELW…NSWGDFLLDT (133 aa). 3 residues coordinate Fe cation: H179, D181, and H240. The residue at position 309 (S309) is a Phosphoserine.

The protein belongs to the ROX family. MINA53 subfamily. It depends on Fe(2+) as a cofactor. As to expression, expressed in liver, skeletal muscle, heart, pancreas, and placenta. Not detected in brain, lung or kidney. Expressed in several lung cancer tissues, but is barely detected in the adjacent non-cancerous tissues. Also highly expressed in several esophageal squamous cell carcinoma (ESCC), and colon cancer tissues, and in various cancer cell lines.

It is found in the nucleus. The protein localises to the nucleolus. It carries out the reaction L-histidyl-[protein] + 2-oxoglutarate + O2 = (3S)-3-hydroxy-L-histidyl-[protein] + succinate + CO2. The enzyme catalyses L-histidyl-[ribosomal protein uL15] + 2-oxoglutarate + O2 = (3S)-3-hydroxy-L-histidyl-[ribosomal protein uL15] + succinate + CO2. Its function is as follows. Oxygenase that can act as both a histone lysine demethylase and a ribosomal histidine hydroxylase. Is involved in the demethylation of trimethylated 'Lys-9' on histone H3 (H3K9me3), leading to an increase in ribosomal RNA expression. Also catalyzes the hydroxylation of 60S ribosomal protein L27a on 'His-39'. May play an important role in cell growth and survival. May be involved in ribosome biogenesis, most likely during the assembly process of pre-ribosomal particles. This chain is Ribosomal oxygenase 2, found in Homo sapiens (Human).